The sequence spans 305 residues: Orotidine 5'-phosphate decarboxylase (305 aa).

The Proton donor role is filled by K108.

Belongs to the OMP decarboxylase family. Type 2 subfamily.

It catalyses the reaction orotidine 5'-phosphate + H(+) = UMP + CO2. It participates in pyrimidine metabolism; UMP biosynthesis via de novo pathway; UMP from orotate: step 2/2. In Caldicellulosiruptor bescii (strain ATCC BAA-1888 / DSM 6725 / KCTC 15123 / Z-1320) (Anaerocellum thermophilum), this protein is Orotidine 5'-phosphate decarboxylase.